Consider the following 222-residue polypeptide: Glutathione S-transferase A4 (222 aa).

Met1 is subject to N-acetylmethionine. The region spanning 3 to 83 (AKPKLYYFNG…YLAAKYNLYG (81 aa)) is the GST N-terminal domain. Residues Tyr9, 53–55 (GQV), and 66–68 (TQT) contribute to the glutathione site. One can recognise a GST C-terminal domain in the interval 85–208 (DLKERVRIDM…QPGSQRKPPP (124 aa)).

This sequence belongs to the GST superfamily. Alpha family. In terms of assembly, homodimer. In terms of processing, the N-terminus is blocked.

It is found in the cytoplasm. It catalyses the reaction RX + glutathione = an S-substituted glutathione + a halide anion + H(+). Its function is as follows. Conjugation of reduced glutathione to a wide number of exogenous and endogenous hydrophobic electrophiles. The protein is Glutathione S-transferase A4 (Gsta4) of Mus musculus (Mouse).